Consider the following 371-residue polypeptide: Putative phosphoserine aminotransferase (371 aa).

Position 45 (arginine 45) interacts with L-glutamate. Phenylalanine 103, threonine 149, aspartate 171, and glutamine 194 together coordinate pyridoxal 5'-phosphate. Lysine 195 carries the post-translational modification N6-(pyridoxal phosphate)lysine. 246-247 serves as a coordination point for pyridoxal 5'-phosphate; that stretch reads NT.

It belongs to the class-V pyridoxal-phosphate-dependent aminotransferase family. SerC subfamily. Homodimer. It depends on pyridoxal 5'-phosphate as a cofactor.

Its subcellular location is the cytoplasm. The enzyme catalyses O-phospho-L-serine + 2-oxoglutarate = 3-phosphooxypyruvate + L-glutamate. It carries out the reaction 4-(phosphooxy)-L-threonine + 2-oxoglutarate = (R)-3-hydroxy-2-oxo-4-phosphooxybutanoate + L-glutamate. It participates in amino-acid biosynthesis; L-serine biosynthesis; L-serine from 3-phospho-D-glycerate: step 2/3. Its pathway is cofactor biosynthesis; pyridoxine 5'-phosphate biosynthesis; pyridoxine 5'-phosphate from D-erythrose 4-phosphate: step 3/5. Catalyzes the reversible conversion of 3-phosphohydroxypyruvate to phosphoserine and of 3-hydroxy-2-oxo-4-phosphonooxybutanoate to phosphohydroxythreonine. The chain is Putative phosphoserine aminotransferase from Mycolicibacterium vanbaalenii (strain DSM 7251 / JCM 13017 / BCRC 16820 / KCTC 9966 / NRRL B-24157 / PYR-1) (Mycobacterium vanbaalenii).